We begin with the raw amino-acid sequence, 81 residues long: Photosystem I iron-sulfur center (81 aa).

4Fe-4S ferredoxin-type domains are found at residues 2–31 (VHVVKIYDTCIGCTQCVRACPCDVLEMVPW) and 39–68 (IASSPRTEDCIGCKRCETACPTDFLSIRVY). Positions 11, 14, 17, 21, 48, 51, 54, and 58 each coordinate [4Fe-4S] cluster.

The eukaryotic PSI reaction center is composed of at least 11 subunits. The cofactor is [4Fe-4S] cluster.

Its subcellular location is the plastid. The protein localises to the chloroplast thylakoid membrane. The enzyme catalyses reduced [plastocyanin] + hnu + oxidized [2Fe-2S]-[ferredoxin] = oxidized [plastocyanin] + reduced [2Fe-2S]-[ferredoxin]. Apoprotein for the two 4Fe-4S centers FA and FB of photosystem I (PSI); essential for photochemical activity. FB is the terminal electron acceptor of PSI, donating electrons to ferredoxin. The C-terminus interacts with PsaA/B/D and helps assemble the protein into the PSI complex. Required for binding of PsaD and PsaE to PSI. PSI is a plastocyanin/cytochrome c6-ferredoxin oxidoreductase, converting photonic excitation into a charge separation, which transfers an electron from the donor P700 chlorophyll pair to the spectroscopically characterized acceptors A0, A1, FX, FA and FB in turn. The polypeptide is Photosystem I iron-sulfur center (Cyanidium caldarium (Red alga)).